Consider the following 137-residue polypeptide: Phosphoribosyl-AMP cyclohydrolase (137 aa).

Residue D84 coordinates Mg(2+). A Zn(2+)-binding site is contributed by C85. Residues D86 and D88 each contribute to the Mg(2+) site. C101 and C108 together coordinate Zn(2+).

The protein belongs to the PRA-CH family. In terms of assembly, homodimer. Mg(2+) is required as a cofactor. Requires Zn(2+) as cofactor.

It localises to the cytoplasm. The enzyme catalyses 1-(5-phospho-beta-D-ribosyl)-5'-AMP + H2O = 1-(5-phospho-beta-D-ribosyl)-5-[(5-phospho-beta-D-ribosylamino)methylideneamino]imidazole-4-carboxamide. It participates in amino-acid biosynthesis; L-histidine biosynthesis; L-histidine from 5-phospho-alpha-D-ribose 1-diphosphate: step 3/9. Functionally, catalyzes the hydrolysis of the adenine ring of phosphoribosyl-AMP. The sequence is that of Phosphoribosyl-AMP cyclohydrolase from Pelodictyon phaeoclathratiforme (strain DSM 5477 / BU-1).